Consider the following 111-residue polypeptide: Beta-2-microglobulin (111 aa).

The first 17 residues, 1 to 17 (MRALILLSLGLLRVAVP), serve as a signal peptide directing secretion. The Ig-like C1-type domain occupies 20-111 (PQVVVYTYKP…KTSIYKLESF (92 aa)).

Belongs to the beta-2-microglobulin family. As to quaternary structure, heterodimer of an alpha chain and a beta chain. Beta-2-microglobulin is the beta-chain of major histocompatibility complex class I molecules.

Its subcellular location is the secreted. Component of the class I major histocompatibility complex (MHC). Involved in the presentation of peptide antigens to the immune system. The protein is Beta-2-microglobulin (b2m) of Rostroraja eglanteria (Clearnose skate).